The following is a 40-amino-acid chain: MTKHPTGIYVGCLVKVIRRRLRMELKESVINYSPFVLQHP.

This is Protein YneP from Escherichia coli (strain K12).